The chain runs to 405 residues: Macrolide efflux protein A (405 aa).

11 helical membrane passes run 14–34, 48–68, 76–98, 145–165, 168–188, 222–242, 259–279, 285–305, 310–330, 350–370, and 373–393; these read IWAGQAVSLITSAILQMAIIF, MASLLGFLPYAVFGPAIGVLV, IMIGADLIIAAAGSVLTIVAFYM, SLQSISYIVSPAVAALLYSVW, NAIIAIDVLGAVIASITVAIV, FALLLVGTLYMFVYMPINALF, ITEISFASGMLIGGLLLGLFG, ILLITASIFMMGISLTISGLL, FFIFVVCCAIMGLSVPFYSGV, LTGSIMSLAMPIGLILSALFA, and IGVNHWFLLSGTLIICIAIVC.

The protein belongs to the major facilitator superfamily. Drug:H(+) antiporter-3 (DHA3) (TC 2.A.1.21) family.

It is found in the cell membrane. Functionally, confers resistance to 14-membered macrolides including erythromycin and to 15-membered macrolides but not to 16-membered macrolides, lincosamides or analogs of streptogramin B. May function as an efflux pump to regulate intracellular macrolide levels. The chain is Macrolide efflux protein A from Streptococcus pyogenes serotype M6 (strain ATCC BAA-946 / MGAS10394).